A 244-amino-acid polypeptide reads, in one-letter code: Large ribosomal subunit protein uL3 (244 aa).

The interval 215–244 (KKPPRERRGFAGSSTVDPLKASKRAVAKKK) is disordered. Over residues 235 to 244 (ASKRAVAKKK) the composition is skewed to basic residues.

Belongs to the universal ribosomal protein uL3 family. As to quaternary structure, part of the 50S ribosomal subunit. Forms a cluster with proteins L14 and L19.

In terms of biological role, one of the primary rRNA binding proteins, it binds directly near the 3'-end of the 23S rRNA, where it nucleates assembly of the 50S subunit. In Koribacter versatilis (strain Ellin345), this protein is Large ribosomal subunit protein uL3.